Consider the following 442-residue polypeptide: tRNA-2-methylthio-N(6)-dimethylallyladenosine synthase (442 aa).

The MTTase N-terminal domain maps to 2-120 (KKVFIRTFGC…LPKMIVDKET (119 aa)). [4Fe-4S] cluster contacts are provided by Cys-11, Cys-49, Cys-83, Cys-157, Cys-161, and Cys-164. The Radical SAM core domain occupies 143–375 (RVEGGAAFVS…NEVIEAETAR (233 aa)). Residues 378–441 (QTMIGTVQRC…TFSLRGKVVE (64 aa)) enclose the TRAM domain.

Belongs to the methylthiotransferase family. MiaB subfamily. As to quaternary structure, monomer. It depends on [4Fe-4S] cluster as a cofactor.

It is found in the cytoplasm. It catalyses the reaction N(6)-dimethylallyladenosine(37) in tRNA + (sulfur carrier)-SH + AH2 + 2 S-adenosyl-L-methionine = 2-methylsulfanyl-N(6)-dimethylallyladenosine(37) in tRNA + (sulfur carrier)-H + 5'-deoxyadenosine + L-methionine + A + S-adenosyl-L-homocysteine + 2 H(+). In terms of biological role, catalyzes the methylthiolation of N6-(dimethylallyl)adenosine (i(6)A), leading to the formation of 2-methylthio-N6-(dimethylallyl)adenosine (ms(2)i(6)A) at position 37 in tRNAs that read codons beginning with uridine. This Neisseria meningitidis serogroup C (strain 053442) protein is tRNA-2-methylthio-N(6)-dimethylallyladenosine synthase.